The sequence spans 104 residues: Large ribosomal subunit protein uL24 (104 aa).

Belongs to the universal ribosomal protein uL24 family. As to quaternary structure, part of the 50S ribosomal subunit.

Functionally, one of two assembly initiator proteins, it binds directly to the 5'-end of the 23S rRNA, where it nucleates assembly of the 50S subunit. One of the proteins that surrounds the polypeptide exit tunnel on the outside of the subunit. The polypeptide is Large ribosomal subunit protein uL24 (Bartonella quintana (strain Toulouse) (Rochalimaea quintana)).